A 257-amino-acid polypeptide reads, in one-letter code: Imidazole glycerol phosphate synthase subunit HisF (257 aa).

Residues D12 and D131 contribute to the active site.

Belongs to the HisA/HisF family. As to quaternary structure, heterodimer of HisH and HisF.

Its subcellular location is the cytoplasm. It carries out the reaction 5-[(5-phospho-1-deoxy-D-ribulos-1-ylimino)methylamino]-1-(5-phospho-beta-D-ribosyl)imidazole-4-carboxamide + L-glutamine = D-erythro-1-(imidazol-4-yl)glycerol 3-phosphate + 5-amino-1-(5-phospho-beta-D-ribosyl)imidazole-4-carboxamide + L-glutamate + H(+). It functions in the pathway amino-acid biosynthesis; L-histidine biosynthesis; L-histidine from 5-phospho-alpha-D-ribose 1-diphosphate: step 5/9. Its function is as follows. IGPS catalyzes the conversion of PRFAR and glutamine to IGP, AICAR and glutamate. The HisF subunit catalyzes the cyclization activity that produces IGP and AICAR from PRFAR using the ammonia provided by the HisH subunit. The chain is Imidazole glycerol phosphate synthase subunit HisF from Burkholderia mallei (strain NCTC 10247).